A 203-amino-acid polypeptide reads, in one-letter code: NAD(P)H dehydrogenase (quinone) (203 aa).

The 192-residue stretch at 3–194 (IMVVYYSAYG…AGANFQGRHV (192 aa)) folds into the Flavodoxin-like domain. FMN is bound by residues 9-14 (SAYGHV) and 82-84 (ARF). Tyr11 contributes to the NAD(+) binding site. A substrate-binding site is contributed by Trp102. FMN-binding positions include 117–123 (STGTQHG) and His138.

It belongs to the WrbA family. FMN is required as a cofactor.

The enzyme catalyses a quinone + NADH + H(+) = a quinol + NAD(+). It carries out the reaction a quinone + NADPH + H(+) = a quinol + NADP(+). The protein is NAD(P)H dehydrogenase (quinone) of Syntrophus aciditrophicus (strain SB).